The sequence spans 260 residues: tRNA pseudouridine synthase A (260 aa).

D52 (nucleophile) is an active-site residue. Y111 contributes to the substrate binding site.

This sequence belongs to the tRNA pseudouridine synthase TruA family. Homodimer.

It carries out the reaction uridine(38/39/40) in tRNA = pseudouridine(38/39/40) in tRNA. In terms of biological role, formation of pseudouridine at positions 38, 39 and 40 in the anticodon stem and loop of transfer RNAs. This chain is tRNA pseudouridine synthase A, found in Beijerinckia indica subsp. indica (strain ATCC 9039 / DSM 1715 / NCIMB 8712).